The following is an 88-amino-acid chain: UPF0250 protein Shew_2940 (88 aa).

This sequence belongs to the UPF0250 family.

This chain is UPF0250 protein Shew_2940, found in Shewanella loihica (strain ATCC BAA-1088 / PV-4).